The sequence spans 388 residues: Galactokinase (388 aa).

Position 33 to 36 (33 to 36 (EHTD)) interacts with substrate. ATP-binding positions include serine 67 and 124–130 (GSGLSSS). Mg(2+) contacts are provided by serine 130 and glutamate 162. Aspartate 174 functions as the Proton acceptor in the catalytic mechanism. Tyrosine 224 contacts substrate.

It belongs to the GHMP kinase family. GalK subfamily.

Its subcellular location is the cytoplasm. The catalysed reaction is alpha-D-galactose + ATP = alpha-D-galactose 1-phosphate + ADP + H(+). It participates in carbohydrate metabolism; galactose metabolism. In terms of biological role, catalyzes the transfer of the gamma-phosphate of ATP to D-galactose to form alpha-D-galactose-1-phosphate (Gal-1-P). This is Galactokinase from Streptococcus thermophilus.